The following is a 548-amino-acid chain: Chaperonin GroEL (548 aa).

ATP contacts are provided by residues 30 to 33 (TLGP), Lys-51, 87 to 91 (DGTTT), Gly-415, and Asp-495.

This sequence belongs to the chaperonin (HSP60) family. As to quaternary structure, forms a cylinder of 14 subunits composed of two heptameric rings stacked back-to-back. Interacts with the co-chaperonin GroES.

Its subcellular location is the cytoplasm. The enzyme catalyses ATP + H2O + a folded polypeptide = ADP + phosphate + an unfolded polypeptide.. Functionally, together with its co-chaperonin GroES, plays an essential role in assisting protein folding. The GroEL-GroES system forms a nano-cage that allows encapsulation of the non-native substrate proteins and provides a physical environment optimized to promote and accelerate protein folding. The protein is Chaperonin GroEL of Idiomarina loihiensis (strain ATCC BAA-735 / DSM 15497 / L2-TR).